Reading from the N-terminus, the 463-residue chain is Chaperone SurA (463 aa).

Positions 1–25 are cleaved as a signal peptide; it reads MTKPFSVVLASLLAITSTISPLASA. PpiC domains follow at residues 174–276 and 289–388; these read GSKY…KLME and VTEY…QRVG. 2 disordered regions span residues 329-348 and 434-463; these read ATAK…GDLG and GDRA…KPTR. Residues 439–452 show a composition bias toward low complexity; it reads NNATAAPAKSADPA. The span at 453-463 shows a compositional bias: pro residues; sequence LPAPPPAKPTR.

The protein localises to the periplasm. It carries out the reaction [protein]-peptidylproline (omega=180) = [protein]-peptidylproline (omega=0). Its function is as follows. Chaperone involved in the correct folding and assembly of outer membrane proteins. Recognizes specific patterns of aromatic residues and the orientation of their side chains, which are found more frequently in integral outer membrane proteins. May act in both early periplasmic and late outer membrane-associated steps of protein maturation. The chain is Chaperone SurA from Xanthomonas oryzae pv. oryzae (strain KACC10331 / KXO85).